The sequence spans 84 residues: Turripeptide IX-03 (84 aa).

Positions 1 to 21 are cleaved as a signal peptide; the sequence is MGFYMLLTVALLLTSLMNVEA. A propeptide spanning residues 22–39 is cleaved from the precursor; sequence TPVDQAERSALEKSGLGN. 3 disulfides stabilise this stretch: cysteine 48–cysteine 70, cysteine 55–cysteine 74, and cysteine 60–cysteine 81.

In terms of tissue distribution, expressed by the venom duct.

It is found in the secreted. This chain is Turripeptide IX-03, found in Gemmula speciosa (Splendid gem-turris).